A 338-amino-acid polypeptide reads, in one-letter code: Anthranilate phosphoribosyltransferase (338 aa).

5-phospho-alpha-D-ribose 1-diphosphate-binding positions include glycine 78, 81 to 82 (GD), threonine 86, 88 to 91 (NIST), 106 to 114 (KHGNRSVSS), and serine 118. Glycine 78 contacts anthranilate. Serine 90 lines the Mg(2+) pocket. Residue asparagine 109 coordinates anthranilate. An anthranilate-binding site is contributed by arginine 164. Mg(2+) contacts are provided by aspartate 223 and glutamate 224.

Belongs to the anthranilate phosphoribosyltransferase family. As to quaternary structure, homodimer. The cofactor is Mg(2+).

The enzyme catalyses N-(5-phospho-beta-D-ribosyl)anthranilate + diphosphate = 5-phospho-alpha-D-ribose 1-diphosphate + anthranilate. It participates in amino-acid biosynthesis; L-tryptophan biosynthesis; L-tryptophan from chorismate: step 2/5. Functionally, catalyzes the transfer of the phosphoribosyl group of 5-phosphorylribose-1-pyrophosphate (PRPP) to anthranilate to yield N-(5'-phosphoribosyl)-anthranilate (PRA). The chain is Anthranilate phosphoribosyltransferase from Bacillus licheniformis (strain ATCC 14580 / DSM 13 / JCM 2505 / CCUG 7422 / NBRC 12200 / NCIMB 9375 / NCTC 10341 / NRRL NRS-1264 / Gibson 46).